A 596-amino-acid polypeptide reads, in one-letter code: Arrestin domain-containing protein C31A2.12 (596 aa).

Residues 194 to 211 (AYAIGSYIPIHFVLVPLL) traverse the membrane as a helical segment. Disordered regions lie at residues 363 to 387 (NLDT…TYAS) and 405 to 446 (QQQP…VITR). Threonine 373 and threonine 374 each carry phosphothreonine. Composition is skewed to polar residues over residues 405–420 (QQQP…SPSN) and 430–446 (SLGS…VITR). Phosphoserine occurs at positions 452, 474, 493, and 497. The tract at residues 493 to 596 (SRPPSPGIVT…MLPSGFSRRN (104 aa)) is disordered. A phosphothreonine mark is found at threonine 502 and threonine 507. A compositionally biased stretch (polar residues) spans 504–522 (PQRTSPSFFVSPTESTRQS). Serine 514 carries the post-translational modification Phosphoserine. The segment covering 531–555 (HSTSSSSGISPSHSSASLAHLSQAS) has biased composition (low complexity).

Belongs to the arrestin family.

It localises to the membrane. The sequence is that of Arrestin domain-containing protein C31A2.12 from Schizosaccharomyces pombe (strain 972 / ATCC 24843) (Fission yeast).